The primary structure comprises 86 residues: Putative membrane protein insertion efficiency factor (86 aa).

It belongs to the UPF0161 family.

Its subcellular location is the cell inner membrane. In terms of biological role, could be involved in insertion of integral membrane proteins into the membrane. This chain is Putative membrane protein insertion efficiency factor, found in Pseudomonas aeruginosa (strain UCBPP-PA14).